The chain runs to 677 residues: MTQVAKKILVTCALPYANGSIHLGHMLEHIQADVWVRYQRMRGHEVNFICADDAHGTPIMLKAQQLGITPEQMIGEMSQEHQTDFAGFNISYDNYHSTHSEENRQLSELIYSRLKENGFIKNRTISQLYDPEKGMFLPDRFVKGTCPKCKSPDQYGDNCEVCGATYSPTELIEPKSVVSGATPVMRDSEHFFFDLPSFSEMLQAWTRSGALQEQVANKMQEWFESGLQQWDISRDAPYFGFEIPNAPGKYFYVWLDAPIGYMGSFKNLCDKRGDSVSFDEYWKKDSTAELYHFIGKDIVYFHSLFWPAMLEGSNFRKPSNLFVHGYVTVNGAKMSKSRGTFIKASTWLNHFDADSLRYYYTAKLSSRIDDIDLNLEDFVQRVNADIVNKVVNLASRNAGFINKRFDGVLASELADPQLYKTFTDAAEVIGEAWESREFGKAVREIMALADLANRYVDEQAPWVVAKQEGRDADLQAICSMGINLFRVLMTYLKPVLPKLTERAEAFLNTELTWDGIQQPLLGHKVNPFKALYNRIDMRQVEALVEASKEEVKAAAAPVTGPLADDPIQETITFDDFAKVDLRVALIENAEFVEGSDKLLRLTLDLGGEKRNVFSGIRSAYPDPQALIGRHTIMVANLAPRKMRFGISEGMVMAAGPGGKDIFLLSPDAGAKPGHQVK.

The 'HIGH' region motif lies at Pro15–His25. Cys146, Cys149, Cys159, and Cys162 together coordinate Zn(2+). The 'KMSKS' region motif lies at Lys333–Ser337. Residue Lys336 participates in ATP binding. The tRNA-binding domain occupies Asp575–Lys677.

Belongs to the class-I aminoacyl-tRNA synthetase family. MetG type 1 subfamily. As to quaternary structure, homodimer. Zn(2+) is required as a cofactor.

It localises to the cytoplasm. The enzyme catalyses tRNA(Met) + L-methionine + ATP = L-methionyl-tRNA(Met) + AMP + diphosphate. Is required not only for elongation of protein synthesis but also for the initiation of all mRNA translation through initiator tRNA(fMet) aminoacylation. In Escherichia coli (strain K12), this protein is Methionine--tRNA ligase (metG).